Here is an 878-residue protein sequence, read N- to C-terminus: Alanine--tRNA ligase (878 aa).

Zn(2+)-binding residues include His565, His569, Cys667, and His671.

Belongs to the class-II aminoacyl-tRNA synthetase family. Zn(2+) serves as cofactor.

The protein localises to the cytoplasm. The catalysed reaction is tRNA(Ala) + L-alanine + ATP = L-alanyl-tRNA(Ala) + AMP + diphosphate. In terms of biological role, catalyzes the attachment of alanine to tRNA(Ala) in a two-step reaction: alanine is first activated by ATP to form Ala-AMP and then transferred to the acceptor end of tRNA(Ala). Also edits incorrectly charged Ser-tRNA(Ala) and Gly-tRNA(Ala) via its editing domain. The protein is Alanine--tRNA ligase of Desulforamulus reducens (strain ATCC BAA-1160 / DSM 100696 / MI-1) (Desulfotomaculum reducens).